The chain runs to 87 residues: Large ribosomal subunit protein bL31B (87 aa).

The protein belongs to the bacterial ribosomal protein bL31 family. Type B subfamily. Part of the 50S ribosomal subunit.

The polypeptide is Large ribosomal subunit protein bL31B (Staphylococcus carnosus (strain TM300)).